Consider the following 479-residue polypeptide: Ribulose bisphosphate carboxylase large chain 2 (479 aa).

Substrate-binding residues include Asn-116 and Thr-166. The active-site Proton acceptor is Lys-168. Lys-170 contacts substrate. Residues Lys-194, Asp-196, and Glu-197 each contribute to the Mg(2+) site. An N6-carboxylysine modification is found at Lys-194. His-287 serves as the catalytic Proton acceptor. Residues Arg-288, His-320, and Ser-372 each contribute to the substrate site.

It belongs to the RuBisCO large chain family. Type I subfamily. As to quaternary structure, heterohexadecamer of 8 large chains and 8 small chains. It depends on Mg(2+) as a cofactor.

The enzyme catalyses 2 (2R)-3-phosphoglycerate + 2 H(+) = D-ribulose 1,5-bisphosphate + CO2 + H2O. It catalyses the reaction D-ribulose 1,5-bisphosphate + O2 = 2-phosphoglycolate + (2R)-3-phosphoglycerate + 2 H(+). Functionally, ruBisCO catalyzes two reactions: the carboxylation of D-ribulose 1,5-bisphosphate, the primary event in carbon dioxide fixation, as well as the oxidative fragmentation of the pentose substrate. Both reactions occur simultaneously and in competition at the same active site. This is Ribulose bisphosphate carboxylase large chain 2 from Bradyrhizobium sp. (strain BTAi1 / ATCC BAA-1182).